A 211-amino-acid polypeptide reads, in one-letter code: Phosphoserine phosphatase 1 (211 aa).

His9 functions as the Tele-phosphohistidine intermediate in the catalytic mechanism. Residue His150 is part of the active site.

The protein belongs to the histidine phosphatase superfamily. Metal-independent phosphoserine phosphatase family. As to quaternary structure, homodimer. Can also form a heterodimer with PspB.

The catalysed reaction is O-phospho-L-serine + H2O = L-serine + phosphate. The enzyme catalyses O-phospho-D-serine + H2O = D-serine + phosphate. Its pathway is amino-acid biosynthesis; L-serine biosynthesis; L-serine from 3-phospho-D-glycerate: step 3/3. With respect to regulation, activity is not inhibited by EDTA in vitro, nor enhanced by the addition of Mg(2+). In terms of biological role, catalyzes the dephosphorylation of L-phosphoserine to serine and inorganic phosphate. Is poorly or not active toward D-phosphoserine, DL-phosphothreonine, 3-phosphoglycerate, para-nitrophenylphosphate, and fructose-6-phosphate. Does not display phosphoglycerate mutase activity. This is Phosphoserine phosphatase 1 (pspA) from Hydrogenobacter thermophilus (strain DSM 6534 / IAM 12695 / TK-6).